A 91-amino-acid polypeptide reads, in one-letter code: Small ribosomal subunit protein uS19 (91 aa).

Belongs to the universal ribosomal protein uS19 family.

In terms of biological role, protein S19 forms a complex with S13 that binds strongly to the 16S ribosomal RNA. This is Small ribosomal subunit protein uS19 from Pseudomonas syringae pv. tomato (strain ATCC BAA-871 / DC3000).